A 222-amino-acid chain; its full sequence is N-(5'-phosphoribosyl)anthranilate isomerase (222 aa).

The protein belongs to the TrpF family.

The catalysed reaction is N-(5-phospho-beta-D-ribosyl)anthranilate = 1-(2-carboxyphenylamino)-1-deoxy-D-ribulose 5-phosphate. It functions in the pathway amino-acid biosynthesis; L-tryptophan biosynthesis; L-tryptophan from chorismate: step 3/5. The protein is N-(5'-phosphoribosyl)anthranilate isomerase of Rhizobium etli (strain CIAT 652).